Here is a 359-residue protein sequence, read N- to C-terminus: WAT1-related protein At4g28040 (359 aa).

10 helical membrane-spanning segments follow: residues 10–30, 37–57, 66–86, 103–123, 133–153, 170–190, 204–224, 240–260, 266–286, and 292–312; these read LALV…KAAF, TVFV…ISFI, PSLG…GVTV, ACAM…IVGF, SVAK…MTFL, WLLG…WLIL, TSAC…LALG, SCCI…AWIV, VFSA…GALY, and YLGS…VLWG. The EamA 1 domain maps to 18-131; it reads TSAGVALFTK…GFESIKRRSM (114 aa). Residues 199-310 enclose the EamA 2 domain; sequence PDHLYTSACT…AIILGLYIVL (112 aa).

It belongs to the drug/metabolite transporter (DMT) superfamily. Plant drug/metabolite exporter (P-DME) (TC 2.A.7.4) family.

The protein localises to the membrane. In Arabidopsis thaliana (Mouse-ear cress), this protein is WAT1-related protein At4g28040.